The primary structure comprises 513 residues: Activin receptor type-2A (513 aa).

The N-terminal stretch at 1-19 is a signal peptide; that stretch reads MGAAAKLAFAVFLISCSSG. Residues 20–135 lie on the Extracellular side of the membrane; sequence AILGRSETQE…TSNPVTPKPP (116 aa). Cystine bridges form between Cys30–Cys60, Cys50–Cys78, Cys85–Cys104, Cys91–Cys103, and Cys105–Cys110. Asn43 and Asn66 each carry an N-linked (GlcNAc...) asparagine glycan. The chain crosses the membrane as a helical span at residues 136 to 161; the sequence is YYNILLYSLVPLMLIAGIVICAFWVY. Topologically, residues 162-513 are cytoplasmic; sequence RHHKMAYPPV…VDFPPKESSL (352 aa). Positions 192-485 constitute a Protein kinase domain; the sequence is LQLLEVKARG…GERITQMQRL (294 aa). Residues 198 to 206 and Lys219 contribute to the ATP site; that span reads KARGRFGCV. The active-site Proton acceptor is Asp322.

Belongs to the protein kinase superfamily. TKL Ser/Thr protein kinase family. TGFB receptor subfamily. Part of a complex consisting of MAGI2/ARIP1, ACVR2A, ACVR1B and SMAD3. Interacts with MAGI2/ARIP1. Interacts with type I receptor ACVR1. Interacts with BMP7. Interacts with TSC22D1/TSC-22. Interacts with activin A/INHBA. Requires Mg(2+) as cofactor. The cofactor is Mn(2+). In terms of tissue distribution, brain, testis, intestine, liver and kidney.

It is found in the cell membrane. The catalysed reaction is L-threonyl-[receptor-protein] + ATP = O-phospho-L-threonyl-[receptor-protein] + ADP + H(+). The enzyme catalyses L-seryl-[receptor-protein] + ATP = O-phospho-L-seryl-[receptor-protein] + ADP + H(+). Functionally, on ligand binding, forms a receptor complex consisting of two type II and two type I transmembrane serine/threonine kinases. Type II receptors phosphorylate and activate type I receptors which autophosphorylate, then bind and activate SMAD transcriptional regulators. Receptor for activin A, activin B and inhibin A. Mediates induction of adipogenesis by GDF6. The chain is Activin receptor type-2A from Mus musculus (Mouse).